Reading from the N-terminus, the 824-residue chain is Silver exporting P-type ATPase (824 aa).

The disordered stretch occupies residues 89-112 (ASEHHHHHDHHEVSPDKIKQSHRQ). Basic and acidic residues predominate over residues 98–112 (HHEVSPDKIKQSHRQ). 6 helical membrane passes run 167–187 (FWLGLLLAFPVLILEMGSHLF), 200–220 (TWLQLLLASPVVLWCGWPFFA), 234–254 (FTLVAMGTGVAWVYSVIATVF), 268–288 (LVAIYFEAAAVITVLVLLGQV), 427–447 (WFVPLVILIAVVAFMIWSVWG), and 455–475 (GLIAAVSVLIIACPCALGLAT). D511 (4-aspartylphosphate intermediate) is an active-site residue. The next 2 membrane-spanning stretches (helical) occupy residues 764 to 784 (IRQNLFFAFIYNALGVPVAAG) and 785 to 805 (LLYPVYGILLSPVIAAAAMAL).

The protein belongs to the cation transport ATPase (P-type) (TC 3.A.3) family. Type IB subfamily.

It localises to the cell membrane. It carries out the reaction Ag(+)(in) + ATP + H2O = Ag(+)(out) + ADP + phosphate + H(+). In terms of biological role, component of the sil cation-efflux system that confers resistance to silver. This is Silver exporting P-type ATPase (silP) from Salmonella typhimurium.